We begin with the raw amino-acid sequence, 193 residues long: Protein B4 (193 aa).

3 helical membrane-spanning segments follow: residues 15 to 35, 36 to 56, and 160 to 180; these read FFVCIFLCVFFCVCIFLCVFF, CVYFFVCVFFCVCFFVCVFFV, and LSLCGSAFCLSFSLARAIVFS.

The protein resides in the host membrane. The protein is Protein B4 (B4) of Homo sapiens (Human).